Reading from the N-terminus, the 379-residue chain is Cytochrome bd-I ubiquinol oxidase subunit 2 (379 aa).

Met1 is modified (N-formylmethionine). At 1–8 the chain is on the cytoplasmic side; that stretch reads MIDYEVLR. The helical transmembrane segment at 9–28 threads the bilayer; that stretch reads FIWWLLVGVLLIGFAVTDGF. At 29-79 the chain is on the periplasmic side; it reads DMGVGMLTRFLGRNDTERRIMINSIAPHWDGNQVWLITAGGALFAAWPMVY. A helical transmembrane segment spans residues 80–99; that stretch reads AAAFSGFYVAMILVLASLFF. Residues 100 to 122 are Cytoplasmic-facing; the sequence is RPVGFDYRSKIEETRWRNMWDWG. A helical membrane pass occupies residues 123 to 142; that stretch reads IFIGSFVPPLVIGVAFGNLL. Residues 143 to 164 are Periplasmic-facing; sequence QGVPFNVDEYLRLYYTGNFFQL. Residues 165–184 form a helical membrane-spanning segment; the sequence is LNPFGLLAGVVSVGMIITQG. The Cytoplasmic segment spans residues 185–205; it reads ATYLQMRTVGELHLRTRATAQ. The helical transmembrane segment at 206–225 threads the bilayer; the sequence is VAALVTLVCFALAGVWVMYG. The Periplasmic portion of the chain corresponds to 226–262; sequence IDGYVVKSTMDHYAASNPLNKEVVREAGAWLVNFNNT. A helical membrane pass occupies residues 263–282; sequence PILWAIPALGVVLPLLTILT. The Cytoplasmic segment spans residues 283 to 292; that stretch reads ARMDKAAWAF. The chain crosses the membrane as a helical span at residues 293 to 312; sequence VFSSLTLACIILTAGIAMFP. Over 313–336 the chain is Periplasmic; sequence FVMPSSTMMNASLTMWDATSSQLT. The helical transmembrane segment at 337 to 356 threads the bilayer; sequence LNVMTWVAVVLVPIILLYTA. The Cytoplasmic portion of the chain corresponds to 357 to 379; that stretch reads WCYWKMFGRITKEDIERNTHSLY.

This sequence belongs to the cytochrome ubiquinol oxidase subunit 2 family. As to quaternary structure, heterodimer of subunits I and II. It depends on heme b as a cofactor. The cofactor is heme d cis-diol.

The protein resides in the cell inner membrane. It catalyses the reaction 2 a ubiquinol + O2(in) + 4 H(+)(in) = 2 a ubiquinone + 2 H2O(in) + 4 H(+)(out). It participates in energy metabolism; oxidative phosphorylation. In terms of biological role, a terminal oxidase that produces a proton motive force by the vectorial transfer of protons across the inner membrane. It is the component of the aerobic respiratory chain of E.coli that predominates when cells are grown at low aeration. Generates a proton motive force using protons and electrons from opposite sides of the membrane to generate H(2)O, transferring 1 proton/electron. The sequence is that of Cytochrome bd-I ubiquinol oxidase subunit 2 (cydB) from Escherichia coli O157:H7.